The chain runs to 527 residues: uncharacterized protein (527 aa).

Disordered regions lie at residues 1-49 (MSSF…IKDE), 99-307 (DFNF…ATTT), 319-353 (TEIN…EDEN), and 382-419 (YINN…QQQE). Over residues 8-17 (YDDESEEEDN) the composition is skewed to acidic residues. 2 stretches are compositionally biased toward low complexity: residues 18–44 (NNNN…NSNN) and 99–115 (DFNF…NSNN). A compositionally biased stretch (basic and acidic residues) spans 141-150 (NEFRNPDLKN). 2 stretches are compositionally biased toward low complexity: residues 167–178 (SSQNTTTTQQSS) and 186–222 (NNNN…NSNN). Residues 229–248 (DDKSKKINENENTVNKKDNI) are compositionally biased toward basic and acidic residues. A compositionally biased stretch (basic residues) spans 283 to 296 (LRKKLLKNQPKTKK). 2 stretches are compositionally biased toward low complexity: residues 297–307 (STTTTTTATTT) and 319–330 (TEINNNNSNSNN). A compositionally biased stretch (acidic residues) spans 386–410 (DDGDDDDDDDENENENDSQPEEEYE).

This is an uncharacterized protein from Dictyostelium discoideum (Social amoeba).